A 24-amino-acid polypeptide reads, in one-letter code: U4-ctenitoxin-Co1b (24 aa).

Post-translationally, disulfide bonds are present. Expressed by the venom gland.

It localises to the secreted. Omega-agatoxins are antagonists of voltage-gated calcium channels (Cav). The polypeptide is U4-ctenitoxin-Co1b (Ctenus ornatus (Brazilian spider)).